Here is a 382-residue protein sequence, read N- to C-terminus: Sulfate adenylyltransferase (382 aa).

This sequence belongs to the sulfate adenylyltransferase family.

The catalysed reaction is sulfate + ATP + H(+) = adenosine 5'-phosphosulfate + diphosphate. The protein operates within sulfur metabolism; hydrogen sulfide biosynthesis; sulfite from sulfate: step 1/3. The polypeptide is Sulfate adenylyltransferase (Ignicoccus hospitalis (strain KIN4/I / DSM 18386 / JCM 14125)).